The following is a 437-amino-acid chain: tRNA modification GTPase MnmE (437 aa).

(6S)-5-formyl-5,6,7,8-tetrahydrofolate is bound by residues arginine 21, glutamate 79, and arginine 119. Residues 223-364 (GFRVVLAGPP…FRSALIAHAR (142 aa)) enclose the TrmE-type G domain. GTP is bound by residues 233–238 (NAGKST), 252–258 (AAEPGTT), and 277–280 (DTAG). Mg(2+) contacts are provided by serine 237 and threonine 258. A (6S)-5-formyl-5,6,7,8-tetrahydrofolate-binding site is contributed by lysine 437.

This sequence belongs to the TRAFAC class TrmE-Era-EngA-EngB-Septin-like GTPase superfamily. TrmE GTPase family. As to quaternary structure, homodimer. Heterotetramer of two MnmE and two MnmG subunits. Requires K(+) as cofactor.

It localises to the cytoplasm. Its function is as follows. Exhibits a very high intrinsic GTPase hydrolysis rate. Involved in the addition of a carboxymethylaminomethyl (cmnm) group at the wobble position (U34) of certain tRNAs, forming tRNA-cmnm(5)s(2)U34. The polypeptide is tRNA modification GTPase MnmE (Novosphingobium aromaticivorans (strain ATCC 700278 / DSM 12444 / CCUG 56034 / CIP 105152 / NBRC 16084 / F199)).